Reading from the N-terminus, the 532-residue chain is Phosphoenolpyruvate carboxylase (532 aa).

This sequence belongs to the PEPCase type 2 family. In terms of assembly, homotetramer. The cofactor is Mg(2+).

The catalysed reaction is oxaloacetate + phosphate = phosphoenolpyruvate + hydrogencarbonate. Catalyzes the irreversible beta-carboxylation of phosphoenolpyruvate (PEP) to form oxaloacetate (OAA), a four-carbon dicarboxylic acid source for the tricarboxylic acid cycle. In Methanopyrus kandleri (strain AV19 / DSM 6324 / JCM 9639 / NBRC 100938), this protein is Phosphoenolpyruvate carboxylase.